Here is a 226-residue protein sequence, read N- to C-terminus: Protein YAE1 homolog (226 aa).

The tract at residues 45–85 is deca-GX3 motif; required for interaction with LTO1; that stretch reads GYRDGIDAGKAVTLQQGFNQGYKKGAEVILNYGRLRGTLSA.

Forms a complex with LTO1.

The protein localises to the cytoplasm. It is found in the nucleus. The complex LTO1:YAE1 functions as a target specific adapter that probably recruits apo-ABCE1 to the cytosolic iron-sulfur protein assembly (CIA) complex machinery. May be required for biogenesis of the large ribosomal subunit and initiation of translation. This chain is Protein YAE1 homolog, found in Homo sapiens (Human).